Here is an 827-residue protein sequence, read N- to C-terminus: Glycerol-3-phosphate acyltransferase (827 aa).

Positions 325–330 match the HXXXXD motif motif; that stretch reads CHRSHM.

It belongs to the GPAT/DAPAT family.

It is found in the cell inner membrane. The enzyme catalyses sn-glycerol 3-phosphate + an acyl-CoA = a 1-acyl-sn-glycero-3-phosphate + CoA. It functions in the pathway phospholipid metabolism; CDP-diacylglycerol biosynthesis; CDP-diacylglycerol from sn-glycerol 3-phosphate: step 1/3. This chain is Glycerol-3-phosphate acyltransferase, found in Shigella flexneri serotype 5b (strain 8401).